A 133-amino-acid polypeptide reads, in one-letter code: Transcription antitermination protein NusB (133 aa).

This sequence belongs to the NusB family.

In terms of biological role, involved in transcription antitermination. Required for transcription of ribosomal RNA (rRNA) genes. Binds specifically to the boxA antiterminator sequence of the ribosomal RNA (rrn) operons. In Shewanella denitrificans (strain OS217 / ATCC BAA-1090 / DSM 15013), this protein is Transcription antitermination protein NusB.